A 444-amino-acid chain; its full sequence is MSHPLRSLPKIDKILQESRFADHSKELLTTLARDYLEEIRAQFLQDATPIPPSESILQEVERRYEASLAPSLVPLVNATGIIVHTNLGRSVFAPELIEEIKPLLTSYNNLEYDLKAGRRGERYSHLHGILKAILGCEEVLVVNNNAAAVFLILHTFAQNQEAIISRGELIEIGGSFRIPEVMKNAGAILKEVGTTNKTHRRDYEEAITPQSALLMKVHKSNYDIVGFTQEVDLQELIELSQKHNLIDYYDLGSGFLESVPFTNEPTLKKIASLSPSLVSFSGDKLLGGAQAGIIFGKKSLIDRLKKNQLLRMLRVDKFTLAALEATLRAHLLHDYEKIPTLKMAHLSLEELEERAKKLKSRVHGYESQILQTQGYAGGGALPNQSFFSIALALCHPQKSPMELEQSLRARGVIARIEQERVLLDMRTIFTSQLESLAQILNEVF.

The residue at position 284 (lysine 284) is an N6-(pyridoxal phosphate)lysine.

This sequence belongs to the SelA family. It depends on pyridoxal 5'-phosphate as a cofactor.

The protein localises to the cytoplasm. It catalyses the reaction L-seryl-tRNA(Sec) + selenophosphate + H(+) = L-selenocysteinyl-tRNA(Sec) + phosphate. It functions in the pathway aminoacyl-tRNA biosynthesis; selenocysteinyl-tRNA(Sec) biosynthesis; selenocysteinyl-tRNA(Sec) from L-seryl-tRNA(Sec) (bacterial route): step 1/1. Its function is as follows. Converts seryl-tRNA(Sec) to selenocysteinyl-tRNA(Sec) required for selenoprotein biosynthesis. The sequence is that of L-seryl-tRNA(Sec) selenium transferase from Wolinella succinogenes (strain ATCC 29543 / DSM 1740 / CCUG 13145 / JCM 31913 / LMG 7466 / NCTC 11488 / FDC 602W) (Vibrio succinogenes).